We begin with the raw amino-acid sequence, 358 residues long: tRNA-specific 2-thiouridylase MnmA (358 aa).

Residues 7–14 and Leu33 contribute to the ATP site; that span reads AMSGGVDS. The Nucleophile role is filled by Cys101. Cysteines 101 and 197 form a disulfide. Gly125 serves as a coordination point for ATP. Positions 147–149 are interaction with tRNA; the sequence is KDQ. Residue Cys197 is the Cysteine persulfide intermediate of the active site.

It belongs to the MnmA/TRMU family.

The protein localises to the cytoplasm. It carries out the reaction S-sulfanyl-L-cysteinyl-[protein] + uridine(34) in tRNA + AH2 + ATP = 2-thiouridine(34) in tRNA + L-cysteinyl-[protein] + A + AMP + diphosphate + H(+). Functionally, catalyzes the 2-thiolation of uridine at the wobble position (U34) of tRNA, leading to the formation of s(2)U34. The sequence is that of tRNA-specific 2-thiouridylase MnmA from Rickettsia prowazekii (strain Madrid E).